A 154-amino-acid polypeptide reads, in one-letter code: Leghemoglobin-2 (154 aa).

The 149-residue stretch at 3–151 (ALTESQAALV…LAIVIKKEMN (149 aa)) folds into the Globin domain. S46 is a binding site for heme b. At S46 the chain carries Phosphoserine. Residue H64 coordinates O2. Residues K67, H98, and K101 each coordinate heme b. Position 139 is a nitrated tyrosine (Y139).

It belongs to the plant globin family. As to quaternary structure, monomer. In terms of processing, nitrated in effective nodules and particularly in hypoxic conditions; this mechanism may play a protective role in the symbiosis by buffering toxic peroxynitrite NO(2)(-). Nitration level decrease during nodule senescence. Post-translationally, phosphorylation at Ser-46 disrupts the molecular environment of its porphyrin ring oxygen binding pocket, thus leading to a reduced oxygen consumption and to the delivery of oxygen O(2) to symbiosomes. In terms of tissue distribution, root nodules.

The protein resides in the cytoplasm. The protein localises to the cytosol. Its subcellular location is the nucleus. Its function is as follows. Leghemoglobin that reversibly binds oxygen O(2) through a pentacoordinated heme iron. In root nodules, facilitates the diffusion of oxygen to the bacteroids while preventing the bacterial nitrogenase from being inactivated by buffering dioxygen, nitric oxide and carbon monoxide, and promoting the formation of reactive oxygen species (ROS, e.g. H(2)O(2)). This role is essential for symbiotic nitrogen fixation (SNF). The sequence is that of Leghemoglobin-2 from Lupinus luteus (European yellow lupine).